We begin with the raw amino-acid sequence, 443 residues long: Putative F-box/FBD/LRR-repeat protein At3g49030 (443 aa).

Residues 20-68 (EDRISELPEDLLLQILSDIPTENVIATSVLSKRWRSLWKMVPNLTFDFT) form the F-box domain. 6 LRR repeats span residues 74–100 (HQTFSENLYRSLTSHEASVLESLQLNF), 152–179 (ILEIQDYILLDLPSPVCLKSLRELRLYE), 180–205 (VHFKDEASVCNLLCGCPSLEVLSVHR), 218–252 (VPSLQRLTIYDFCIGGGKGGYVINAPSLKYLNIVG), 272–297 (ISDVSHIANENILESLTSVKRLSLES), and 320–345 (KEREWWNLLSRMLESSPKLQILKLTG). Residues 357 to 408 (NWNPPKCVPECLLFHLEKFLWTGYEWQRGDEKEVATYILENARLLKKATFST) enclose the FBD domain.

This Arabidopsis thaliana (Mouse-ear cress) protein is Putative F-box/FBD/LRR-repeat protein At3g49030.